We begin with the raw amino-acid sequence, 343 residues long: MEVSKAEQAIYDRQIRLWGMEAQNKIRNSKVLIIGGKQLGAEVAKTLSLAGVDEMHLVDHRLVDTEEIGMNFLYDASVDNSKMTKWAASYNFLYNLNRNVKLFIVEEDVLSKNDSEIEEYLTKFTLVVVLDESYERTAKVNNICRKHHIRFISGAIYGWIGYAFFDFDGHAYLVKAKSPDCLNEEESETGKTSTVVTVDEEFVLETFSYPSFVETLNSDFTAKKIVRKCKRIVPTSYFLVKSMLRASSENKLTGVTENDIEKLIPIWNEEVAAGNHTIDMQPVQPDRFDHLFGPNFGPTAACVGGVIGQEAIKSISEGKNPLRNLFIYTGFESTGFMCNFPPV.

Belongs to the ubiquitin-activating E1 family. In terms of assembly, heterodimer of aos-1 and uba-2.

It functions in the pathway protein modification; protein sumoylation. The dimeric enzyme acts as an E1 ligase for smo-1. It mediates ATP-dependent activation of smo-1 and formation of a thioester with a conserved cysteine residue on uba-2. This chain is SUMO-activating enzyme subunit aos-1 (aos-1), found in Caenorhabditis elegans.